The primary structure comprises 701 residues: L-glutamate oxidase precursor (701 aa).

An N-terminal signal peptide occupies residues 1 to 14 (MTTDTARRHTGAER). Residues alanine 69, glutamate 88, alanine 89, arginine 97, methionine 123, arginine 124, methionine 354, and serine 409 each contribute to the FAD site. A propeptide spanning residues 481–520 (LALPQSVRNLPTGLLGAHPSVDESRIGEEQVEYYRNSELR) is cleaved from the precursor. FAD is bound by residues glutamate 645, tryptophan 653, and isoleucine 654. A propeptide spanning residues 684–701 (RRGAAAATEPMREEALTS) is cleaved from the precursor.

Belongs to the flavin monoamine oxidase family. LGOX subfamily. In terms of assembly, the LGOX precursor forms homodimers. The mature enzyme is a heterohexamer composed of 2 alpha chains, 2 beta chains and 2 gamma chains (alpha2beta2gamma2). Requires FAD as cofactor. In terms of processing, the precursor form is proteolytically cleaved by an endopeptidase into alpha, beta and gamma chains, which form the stable mature enzyme. Activation by proteolysis occurs after secretion.

Its subcellular location is the secreted. The catalysed reaction is L-glutamate + O2 + H2O = H2O2 + 2-oxoglutarate + NH4(+). Produced as a single polypeptide precursor and is activated by proteolytic cleavage. The LGOX precursor is an active enzyme, but it exhibits lower catalytic efficiency and lower thermostability compared with the mature hexameric LGOX. The mature form is strongly inhibited by p-chloromercuribenzoate, but not by CuCl(2), EDTA and diethyldithiocarbamate. In terms of biological role, catalyzes the oxidative deamination of L-glutamate to 2-ketoglutarate along with the production of ammonia and hydrogen peroxide. Shows strict substrate specificity for L-glutamate, and exhibits only very weak activity with L-aspartate. In Streptomyces sp, this protein is L-glutamate oxidase precursor.